The sequence spans 182 residues: Crossover junction endodeoxyribonuclease RuvC (182 aa).

Residues Asp7, Glu69, and Asp141 contribute to the active site. Residues Asp7, Glu69, and Asp141 each contribute to the Mg(2+) site.

This sequence belongs to the RuvC family. In terms of assembly, homodimer which binds Holliday junction (HJ) DNA. The HJ becomes 2-fold symmetrical on binding to RuvC with unstacked arms; it has a different conformation from HJ DNA in complex with RuvA. In the full resolvosome a probable DNA-RuvA(4)-RuvB(12)-RuvC(2) complex forms which resolves the HJ. Mg(2+) serves as cofactor.

It localises to the cytoplasm. It catalyses the reaction Endonucleolytic cleavage at a junction such as a reciprocal single-stranded crossover between two homologous DNA duplexes (Holliday junction).. Its function is as follows. The RuvA-RuvB-RuvC complex processes Holliday junction (HJ) DNA during genetic recombination and DNA repair. Endonuclease that resolves HJ intermediates. Cleaves cruciform DNA by making single-stranded nicks across the HJ at symmetrical positions within the homologous arms, yielding a 5'-phosphate and a 3'-hydroxyl group; requires a central core of homology in the junction. The consensus cleavage sequence is 5'-(A/T)TT(C/G)-3'. Cleavage occurs on the 3'-side of the TT dinucleotide at the point of strand exchange. HJ branch migration catalyzed by RuvA-RuvB allows RuvC to scan DNA until it finds its consensus sequence, where it cleaves and resolves the cruciform DNA. This Albidiferax ferrireducens (strain ATCC BAA-621 / DSM 15236 / T118) (Rhodoferax ferrireducens) protein is Crossover junction endodeoxyribonuclease RuvC.